Reading from the N-terminus, the 375-residue chain is Thioredoxin reductase 1, mitochondrial (375 aa).

Residues Met1–Phe37 constitute a mitochondrion transit peptide. Residues Ser58–Ala61, Phe79–Glu80, Ile87–Gln92, Asn101, Val134, Cys192, Asp337, and Arg344–Ala346 each bind FAD. The cysteines at positions 189 and 192 are disulfide-linked.

Belongs to the class-II pyridine nucleotide-disulfide oxidoreductase family. In terms of assembly, homodimer. FAD is required as a cofactor. Ubiquitous.

Its subcellular location is the cytoplasm. It localises to the mitochondrion. It carries out the reaction [thioredoxin]-dithiol + NADP(+) = [thioredoxin]-disulfide + NADPH + H(+). Functionally, NADPH-dependent thioredoxin-disulfide reductase that reduces thioredoxins O1, O2 and F3. The sequence is that of Thioredoxin reductase 1, mitochondrial (NTR1) from Arabidopsis thaliana (Mouse-ear cress).